Reading from the N-terminus, the 365-residue chain is DNA N6-methyl methyltransferase (365 aa).

It belongs to the MT-A70-like family.

The enzyme catalyses a 2'-deoxyadenosine in DNA + S-adenosyl-L-methionine = an N(6)-methyl-2'-deoxyadenosine in DNA + S-adenosyl-L-homocysteine + H(+). Methylates DNA on the 6th position of adenine (N(6)-methyladenosine). N(6)-methyladenosine (m6A) DNA is involved in epigenetic transgenerational inheritance. In Caenorhabditis elegans, this protein is DNA N6-methyl methyltransferase.